A 251-amino-acid polypeptide reads, in one-letter code: POU class 2 homeobox associating factor 3 (251 aa).

Residues 5–27 (PKVYQGVRVKITVKELLQQRRAH) form the OCA domain. Residues 24 to 45 (RRAHQAASGGTRSGGSSVHLSD) are disordered. Residues 31-40 (SGGTRSGGSS) are compositionally biased toward low complexity.

The protein belongs to the POU2AF family. As to quaternary structure, interacts with POU2F3 in a DNA-dependent manner; this interaction increases POU2F3 transactivation activity. Expressed in many cell types of epithelial, mesenchymal and hematopoietic origins. Expressed in tufs cells.

The protein resides in the cytoplasm. It is found in the nucleus. Functionally, transcriptional coactivator that specifically associates with POU2F3. This complex drives the development of tuft cells, a rare a rare chemosensory cells that coordinate immune and neural functions within mucosal epithelial tissues. The sequence is that of POU class 2 homeobox associating factor 3 from Homo sapiens (Human).